A 343-amino-acid chain; its full sequence is Methionine synthase (343 aa).

Zn(2+)-binding residues include His211, Cys213, Glu236, and Cys315.

Belongs to the archaeal MetE family. The cofactor is Zn(2+).

It participates in amino-acid biosynthesis; L-methionine biosynthesis via de novo pathway. Functionally, catalyzes the transfer of a methyl group to L-homocysteine resulting in methionine formation. The physiological methyl donor is unknown. This is Methionine synthase from Thermoplasma acidophilum (strain ATCC 25905 / DSM 1728 / JCM 9062 / NBRC 15155 / AMRC-C165).